The chain runs to 756 residues: Putative beta-xylosidase (756 aa).

The first 18 residues, 1–18, serve as a signal peptide directing secretion; sequence MKKLLFTFLVSTGTIFFS. Residue Cys19 is the site of N-palmitoyl cysteine attachment. Residue Cys19 is the site of S-diacylglycerol cysteine attachment.

It belongs to the glycosyl hydrolase 3 family.

Its subcellular location is the cell outer membrane. In terms of biological role, glycoside hydrolase probably involved in ulvan degradation. Ulvan is the main polysaccharide component of the Ulvales (green seaweed) cell wall. It is composed of disaccharide building blocks comprising 3-sulfated rhamnose (Rha3S) linked to D-glucuronic acid (GlcA), L-iduronic acid (IduA), or D-xylose (Xyl). The sequence is that of Putative beta-xylosidase from Formosa agariphila (strain DSM 15362 / KCTC 12365 / LMG 23005 / KMM 3901 / M-2Alg 35-1).